The following is a 387-amino-acid chain: Galactokinase (387 aa).

33-36 (EHID) lines the substrate pocket. Residues Ser-67 and 124 to 130 (GAGLSSS) each bind ATP. Mg(2+)-binding residues include Ser-130 and Glu-162. Residue Asp-174 is the Proton acceptor of the active site. Tyr-224 lines the substrate pocket.

The protein belongs to the GHMP kinase family. GalK subfamily.

The protein resides in the cytoplasm. The catalysed reaction is alpha-D-galactose + ATP = alpha-D-galactose 1-phosphate + ADP + H(+). It participates in carbohydrate metabolism; galactose metabolism. Functionally, catalyzes the transfer of the gamma-phosphate of ATP to D-galactose to form alpha-D-galactose-1-phosphate (Gal-1-P). The protein is Galactokinase of Clostridium perfringens (strain SM101 / Type A).